A 170-amino-acid chain; its full sequence is Protein Rex (170 aa).

Over residues 1 to 16 (MPKTRRQRTRRARRNR) the composition is skewed to basic residues. Disordered regions lie at residues 1–27 (MPKT…SQDL) and 69–170 (VQST…GEKP). The short motif at 2 to 19 (PKTRRQRTRRARRNRPPT) is the Nuclear localization signal, and RNA-binding (RxRE) element. The interval 57-71 (PPAYIDMPSWPPVQS) is homomultimerization. Residues 82-95 (ALSALLSNTLSLAS) are compositionally biased toward low complexity. The Nuclear export signal motif lies at 83-94 (LSALLSNTLSLA). Positions 124–132 (PSFNQCEST) are homomultimerization. The span at 143 to 160 (PSGISSPPSPSPNLASVP) shows a compositional bias: low complexity. Phosphoserine; by host is present on residues serine 151 and serine 153. Positions 161 to 170 (KTSTPPGEKP) are enriched in polar residues.

It belongs to the deltaretrovirus Rex protein family. In terms of assembly, homomultimer. Phosphorylation is essential for RNA-binding and function.

The protein resides in the host nucleus. It is found in the host nucleolus. Its subcellular location is the host cytoplasm. Functionally, rex escorts unspliced gag-pro-pol and singly spliced env mRNAs out of the nucleus of infected cells. These mRNAs carry a recognition sequence called Rex responsive element (RxRE or XRE) located at the 3' region of the long terminal repeat (LTR). This function is essential since most HTLV proteins are translated from unspliced or partially spliced pre-mRNAs that cannot exit the nucleus by the pathway used by fully processed cellular mRNAs. The sequence is that of Protein Rex from Human T-cell leukemia virus 2 (HTLV-2).